The following is a 401-amino-acid chain: Beta-ketoadipyl-CoA thiolase (401 aa).

Catalysis depends on C91, which acts as the Acyl-thioester intermediate. Active-site proton acceptor residues include H357 and C387.

The protein belongs to the thiolase-like superfamily. Thiolase family. Homotetramer.

The catalysed reaction is succinyl-CoA + acetyl-CoA = 3-oxoadipyl-CoA + CoA. Its pathway is aromatic compound metabolism; beta-ketoadipate pathway; acetyl-CoA and succinyl-CoA from 3-oxoadipate: step 2/2. Functionally, catalyzes thiolytic cleavage of beta-ketoadipyl-CoA to succinyl-CoA and acetyl-CoA. In Pseudomonas knackmussii (strain DSM 6978 / CCUG 54928 / LMG 23759 / B13), this protein is Beta-ketoadipyl-CoA thiolase (pcaF).